The sequence spans 155 residues: Protein-export protein SecB (155 aa).

Belongs to the SecB family. Homotetramer, a dimer of dimers. One homotetramer interacts with 1 SecA dimer.

It is found in the cytoplasm. Functionally, one of the proteins required for the normal export of preproteins out of the cell cytoplasm. It is a molecular chaperone that binds to a subset of precursor proteins, maintaining them in a translocation-competent state. It also specifically binds to its receptor SecA. The protein is Protein-export protein SecB of Vibrio atlanticus (strain LGP32) (Vibrio splendidus (strain Mel32)).